The sequence spans 432 residues: uncharacterized protein (432 aa).

The Cytochrome c domain maps to 223–432 (ASAVRGEALF…KDLIEYLKTR (210 aa)). 3 residues coordinate heme c: cysteine 236, cysteine 239, and histidine 240.

This is an uncharacterized protein from Sinorhizobium fredii (strain NBRC 101917 / NGR234).